The chain runs to 479 residues: FAD-dependent monooxygenase ausM (479 aa).

FAD is bound by residues glutamate 40, glycine 54, and arginine 113. Residue tyrosine 224 is part of the active site. Residue asparagine 289 is glycosylated (N-linked (GlcNAc...) asparagine). Residues aspartate 316 and alanine 329 each coordinate FAD. Residues 449–469 (TLPWLVISLPVLASMLCYLVY) traverse the membrane as a helical segment.

This sequence belongs to the paxM FAD-dependent monooxygenase family. FAD serves as cofactor.

Its subcellular location is the membrane. It participates in secondary metabolite biosynthesis; terpenoid biosynthesis. Its function is as follows. FAD-dependent monooxygenase; part of the gene cluster B that mediates the biosynthesis of austinol and dehydroaustinol, two fungal meroterpenoids. The first step of the pathway is the synthesis of 3,5-dimethylorsellinic acid by the polyketide synthase ausA. 3,5-dimethylorsellinic acid is then prenylated by the polyprenyl transferase ausN. Further epoxidation by the FAD-dependent monooxygenase ausM and cyclization by the probable terpene cyclase ausL lead to the formation of protoaustinoid A. Protoaustinoid A is then oxidized to spiro-lactone preaustinoid A3 by the combined action of the FAD-binding monooxygenases ausB and ausC, and the dioxygenase ausE. Acid-catalyzed keto-rearrangement and ring contraction of the tetraketide portion of preaustinoid A3 by ausJ lead to the formation of preaustinoid A4. The aldo-keto reductase ausK, with the help of ausH, is involved in the next step by transforming preaustinoid A4 into isoaustinone which is in turn hydroxylated by the P450 monooxygenase ausI to form austinolide. Finally, the cytochrome P450 monooxygenase ausG modifies austinolide to austinol. Austinol can be further modified to dehydroaustinol which forms a diffusible complex with diorcinol that initiates conidiation. Due to genetic rearrangements of the clusters and the subsequent loss of some enzymes, the end products of the Emericella nidulans austinoid biosynthesis clusters are austinol and dehydroaustinol, even if additional enzymes, such as the O-acetyltransferase ausQ and the cytochrome P450 monooxygenase ausR are still functional. This chain is FAD-dependent monooxygenase ausM, found in Emericella nidulans (strain FGSC A4 / ATCC 38163 / CBS 112.46 / NRRL 194 / M139) (Aspergillus nidulans).